The following is a 1593-amino-acid chain: Nischarin (1593 aa).

The segment at 1–134 is necessary for binding to phosphoinositide-3-P; not sufficient for targeting to endosomes; sequence MAAATLSFGP…GVTAALAEEL (134 aa). The 111-residue stretch at 12–122 folds into the PX domain; that stretch reads REAEPAKEAR…AHFLHFHLYE (111 aa). Positions 121-695 are necessary for homooligomerization and targeting to endosomes; that stretch reads YEVNGVTAAL…ERLALEWALG (575 aa). The tract at residues 246 to 869 is interaction with PAK1; the sequence is MSVRFSATSM…LVYSDKRMVQ (624 aa). 6 LRR repeats span residues 290–311, 313–334, 335–356, 358–379, 380–401, and 405–426; these read ALTT…VKLI, KIEY…QHLY, NLVH…HTKL, NVKT…HKLY, SLVN…KSIG, and CLER…RTKV. Basic and acidic residues predominate over residues 466 to 480; that stretch reads SKLSNTEKKAGEDFR. Residues 466–499 are disordered; it reads SKLSNTEKKAGEDFRLPPAPCIRPGGSPPAAPAS. Pro residues predominate over residues 482–496; it reads PPAPCIRPGGSPPAA. Phosphoserine is present on residues serine 543, serine 545, and serine 548. The stretch at 624-694 forms a coiled coil; that stretch reads IEAANQREEA…EERLALEWAL (71 aa). Positions 629-687 are disordered; it reads QREEAHGEQGEEEEEEEEEEDVAENRYFEMGPPDAEEEEGSGQGEEDEEDEDEEAEEER. Acidic residues-rich tracts occupy residues 638–650 and 662–685; these read GEEE…EEDV and DAEE…EAEE. The interaction with LIMK stretch occupies residues 661-869; that stretch reads PDAEEEEGSG…LVYSDKRMVQ (209 aa). Residues 709-807 are interaction with ITGA5; the sequence is KVLWCFLIHV…ANLHEFHADL (99 aa). A disordered region spans residues 1016–1185; the sequence is NPSAKPRNQP…PAGGPAPAEA (170 aa). Composition is skewed to low complexity over residues 1038–1069 and 1081–1158; these read ETPA…LAPV and AEAP…APAP. 10 tandem repeats follow at residues 1081-1086, 1087-1092, 1093-1098, 1099-1104, 1105-1110, 1111-1116, 1123-1128, 1129-1134, 1135-1140, and 1141-1146. The segment at 1081-1146 is 10 X 6 AA tandem repeat of A-E-A-P-A-A; sequence AEAPAAAEAP…APAAAEAPAA (66 aa). Residues 1159 to 1179 are compositionally biased toward pro residues; it reads NQAPAPARGPAPARGPAPAGG. At threonine 1371 the chain carries Phosphothreonine. A Phosphoserine modification is found at serine 1373.

In terms of assembly, homooligomer. Interacts with GRB2. Interacts with PIK3R1; probably associates with the PI3-kinase complex. Interacts with IRS4. Found in a complex with ITGA5 and PAK1. Found in a complex with LIMK1 and PAK1. Interacts with ITGA5 (via cytoplasmic domain); this interaction is direct. Interacts with PAK1 (via kinase domain); this interaction is direct and is increased upon activation of PAK1. Interacts with LIMK1 (via PDZ and kinase domain); this interaction is direct. Interacts with LIMK2; this interaction depends on LIMK2 activity. Interacts with RAC1 (activated state). Interacts with STK11; this interaction may increase STK11 activity. As to expression, highly expressed in brain and kidney. Moderately expressed in heart, liver, lung and skeletal muscle. Not detected in spleen and testis.

Its subcellular location is the cell membrane. It localises to the cytoplasm. It is found in the early endosome. The protein resides in the recycling endosome. Acts either as the functional imidazoline-1 receptor (I1R) candidate or as a membrane-associated mediator of the I1R signaling. Binds numerous imidazoline ligands that induces initiation of cell-signaling cascades triggering to cell survival, growth and migration. Its activation by the agonist rilmenidine induces an increase in phosphorylation of mitogen-activated protein kinases MAPK1 and MAPK3 in rostral ventrolateral medulla (RVLM) neurons that exhibited rilmenidine-evoked hypotension. Blocking its activation with efaroxan abolished rilmenidine-induced mitogen-activated protein kinase phosphorylation in RVLM neurons. Acts as a modulator of Rac-regulated signal transduction pathways. Suppresses Rac1-stimulated cell migration by interacting with PAK1 and inhibiting its kinase activity. Also blocks Pak-independent Rac signaling by interacting with RAC1 and inhibiting Rac1-stimulated NF-kB response element and cyclin D1 promoter activation. Also inhibits LIMK1 kinase activity by reducing LIMK1 'Tyr-508' phosphorylation. Inhibits Rac-induced cell migration and invasion in breast and colon epithelial cells. Inhibits lamellipodia formation, when overexpressed. Plays a role in protection against apoptosis. Involved in association with IRS4 in the enhancement of insulin activation of MAPK1 and MAPK3. When overexpressed, induces a redistribution of cell surface ITGA5 integrin to intracellular endosomal structures. This Mus musculus (Mouse) protein is Nischarin (Nisch).